A 1134-amino-acid polypeptide reads, in one-letter code: Nck-associated protein 1-like (1134 aa).

Residues 638–671 (KAKNKKSMKQRQAPRKGEPERDKPGAESHRKNRS) form a disordered region. The segment covering 639–651 (AKNKKSMKQRQAP) has biased composition (basic residues). A compositionally biased stretch (basic and acidic residues) spans 652 to 666 (RKGEPERDKPGAESH). Residues 999 to 1019 (LLLIFLAVSLPLLATDPSSFF) form a helical membrane-spanning segment.

In hematopoietic cells, component of the WAVE2 complex composed of ABI1, CYFIP1/SRA1, NCKAP1L/HEM1 and WASF2/WAVE2. Interacts with ARHGAP4, PIK3C3/VPS34 and PPP1R12A/MYPT1. Interacts with mammalian target of rapamycin complex 2 (mTORC2) components, including MTOR and RICTOR. As to expression, predominantly expressed in developing and mature hematopoietic cells. Also detected in urogenital tissues, including testis.

It localises to the membrane. Its subcellular location is the cytoplasm. Essential hematopoietic-specific regulator of the actin cytoskeleton. Controls lymphocyte development, activation, proliferation and homeostasis, erythrocyte membrane stability, as well as phagocytosis and migration by neutrophils and macrophages. Component of the WAVE2 complex which signals downstream of RAC to stimulate F-actin polymerization. Required for stabilization and/or translation of the WAVE2 complex proteins in hematopoietic cells. Within the WAVE2 complex, enables the cortical actin network to restrain excessive degranulation and granule release by T-cells. Required for efficient T-lymphocyte and neutrophil migration. Exhibits complex cycles of activation and inhibition to generate waves of propagating the assembly with actin. Also involved in mechanisms WAVE independent to regulate myosin and actin polymerization during neutrophil chemotaxis. In T-cells, required for proper mechanistic target of rapamycin complex 2 (mTORC2)-dependent AKT phosphorylation, cell proliferation and cytokine secretion, including that of IL2 and TNF. The protein is Nck-associated protein 1-like of Mus musculus (Mouse).